Here is a 53-residue protein sequence, read N- to C-terminus: uncharacterized protein (53 aa).

The helical transmembrane segment at 4 to 24 (FILLIVGFIYGAGGVLLYSVY) threads the bilayer.

It localises to the host membrane. This is an uncharacterized protein from Acidianus bottle-shaped virus (isolate Italy/Pozzuoli) (ABV).